Consider the following 470-residue polypeptide: Poly(A) polymerase catalytic subunit (470 aa).

Active-site residues include Asp-192 and Asp-194.

This sequence belongs to the poxviridae poly(A) polymerase catalytic subunit family. Heterodimer of a large (catalytic) subunit and a small (regulatory) subunit.

It catalyses the reaction RNA(n) + ATP = RNA(n)-3'-adenine ribonucleotide + diphosphate. In terms of biological role, polymerase that creates the 3'-poly(A) tail of mRNA's. The protein is Poly(A) polymerase catalytic subunit (PAPL) of Oryctolagus cuniculus (Rabbit).